The chain runs to 815 residues: Phosphatidylinositol 4-phosphate 5-kinase 9 (815 aa).

8 MORN repeats span residues 58–80 (YSGS…DGCV), 81–103 (YDGE…SGAS), 104–126 (YDGE…NKLT), 127–149 (YKGR…NGDV), 150–172 (FEGS…NKNV), 173–195 (YLGD…TGDS), 196–218 (YEGS…DGGC), and 219–240 (YVGT…AGTR). Residues 391–809 (GHRSYDLMLS…RFLEFIKKVF (419 aa)) form the PIPK domain. Residues 769–790 (YNMTKKIEHAYKSLHFDSLSIS) are activation loop.

Interacts with CINV1. Widely expressed.

The protein resides in the membrane. The protein localises to the nucleus. It carries out the reaction a 1,2-diacyl-sn-glycero-3-phospho-(1D-myo-inositol 4-phosphate) + ATP = a 1,2-diacyl-sn-glycero-3-phospho-(1D-myo-inositol-4,5-bisphosphate) + ADP + H(+). Functionally, plays a role in sugar-mediated root development. Interaction with CINV1 induces repression of CINV1 activity and negative regulation of sugar-mediated root cell elongation. The chain is Phosphatidylinositol 4-phosphate 5-kinase 9 (PIP5K9) from Arabidopsis thaliana (Mouse-ear cress).